We begin with the raw amino-acid sequence, 929 residues long: Isoleucine--tRNA ligase (929 aa).

A 'HIGH' region motif is present at residues 58 to 68 (PYANGDIHIGH). Glu563 is a binding site for L-isoleucyl-5'-AMP. The short motif at 605 to 609 (KMSKS) is the 'KMSKS' region element. An ATP-binding site is contributed by Lys608. Zn(2+) is bound by residues Cys892, Cys895, Cys912, and Cys915.

This sequence belongs to the class-I aminoacyl-tRNA synthetase family. IleS type 1 subfamily. As to quaternary structure, monomer. The cofactor is Zn(2+).

It is found in the cytoplasm. The catalysed reaction is tRNA(Ile) + L-isoleucine + ATP = L-isoleucyl-tRNA(Ile) + AMP + diphosphate. Functionally, catalyzes the attachment of isoleucine to tRNA(Ile). As IleRS can inadvertently accommodate and process structurally similar amino acids such as valine, to avoid such errors it has two additional distinct tRNA(Ile)-dependent editing activities. One activity is designated as 'pretransfer' editing and involves the hydrolysis of activated Val-AMP. The other activity is designated 'posttransfer' editing and involves deacylation of mischarged Val-tRNA(Ile). The protein is Isoleucine--tRNA ligase of Neisseria meningitidis serogroup B (strain ATCC BAA-335 / MC58).